The following is a 257-amino-acid chain: MVLIRVLANLLILQLSYAQKSSELVVGGDECNINEHRSLVLVYSDGIQCGGTLINQEWMLTAAHCDGKKMKLQFGLHSKKVPNKDKQTRVPKEKFFCLSSKNNKEWDKDIMLIRLNRPVNNSKHIAPLSLPSKPPSQDTVCNIMGWGTISPTEETYPDVPHCANINILDHAVCRAIYPGLLEKSRVLCAGILEGGKDTCGGDSGGPLICNGEIQGLLSVGGDPCAQPHVPALYIKVFDYTEWIQSIITGNTAATCPP.

An N-terminal signal peptide occupies residues 1–18 (MVLIRVLANLLILQLSYA). A propeptide spanning residues 19–24 (QKSSEL) is cleaved from the precursor. The region spanning 25–248 (VVGGDECNIN…YTEWIQSIIT (224 aa)) is the Peptidase S1 domain. 6 disulfides stabilise this stretch: C31/C162, C49/C65, C97/C255, C141/C209, C173/C188, and C199/C224. Residues H64 and D109 each act as charge relay system in the active site. N-linked (GlcNAc...) asparagine glycosylation occurs at N120. Residue S203 is the Charge relay system of the active site.

It belongs to the peptidase S1 family. Snake venom subfamily. Monomer. Expressed by the venom gland.

It is found in the secreted. Functionally, snake venom serine protease that may act in the hemostasis system of the prey. This is Snake venom serine proteinase 11 from Crotalus adamanteus (Eastern diamondback rattlesnake).